The primary structure comprises 534 residues: CTP synthase (534 aa).

The segment at 1-267 (MTKYIFVTGG…GDLIIERLAL (267 aa)) is amidoligase domain. A CTP-binding site is contributed by Ser13. Position 13 (Ser13) interacts with UTP. 14 to 19 (SVGKGI) contacts ATP. Tyr54 is a binding site for L-glutamine. Asp71 contributes to the ATP binding site. Positions 71 and 141 each coordinate Mg(2+). CTP contacts are provided by residues 148-150 (DIE), 188-193 (KTKPTQ), and Lys224. UTP-binding positions include 188–193 (KTKPTQ) and Lys224. Positions 292 to 534 (TVAIVGKYVE…VQAALEQIAE (243 aa)) constitute a Glutamine amidotransferase type-1 domain. Gly354 is a binding site for L-glutamine. The active-site Nucleophile; for glutamine hydrolysis is the Cys381. L-glutamine-binding positions include 382-385 (LGMQ), Glu405, and Arg462. Residues His507 and Glu509 contribute to the active site.

It belongs to the CTP synthase family. Homotetramer.

The enzyme catalyses UTP + L-glutamine + ATP + H2O = CTP + L-glutamate + ADP + phosphate + 2 H(+). It catalyses the reaction L-glutamine + H2O = L-glutamate + NH4(+). The catalysed reaction is UTP + NH4(+) + ATP = CTP + ADP + phosphate + 2 H(+). It functions in the pathway pyrimidine metabolism; CTP biosynthesis via de novo pathway; CTP from UDP: step 2/2. Allosterically activated by GTP, when glutamine is the substrate; GTP has no effect on the reaction when ammonia is the substrate. The allosteric effector GTP functions by stabilizing the protein conformation that binds the tetrahedral intermediate(s) formed during glutamine hydrolysis. Inhibited by the product CTP, via allosteric rather than competitive inhibition. Functionally, catalyzes the ATP-dependent amination of UTP to CTP with either L-glutamine or ammonia as the source of nitrogen. Regulates intracellular CTP levels through interactions with the four ribonucleotide triphosphates. In Herpetosiphon aurantiacus (strain ATCC 23779 / DSM 785 / 114-95), this protein is CTP synthase.